The chain runs to 125 residues: SKP1-like protein 7 (125 aa).

The segment at 94–125 is interaction with the F-box domain of F-box proteins; sequence MNAAYDLHIKSLLALAYQTVADMVNDNKWAFE.

Belongs to the SKP1 family. Part of a SCF (SKP1-cullin-F-box) protein ligase complex. Restricted to siliques.

The protein localises to the nucleus. Its pathway is protein modification; protein ubiquitination. Involved in ubiquitination and subsequent proteasomal degradation of target proteins. Together with CUL1, RBX1 and a F-box protein, it forms a SCF E3 ubiquitin ligase complex. The functional specificity of this complex depends on the type of F-box protein. In the SCF complex, it serves as an adapter that links the F-box protein to CUL1. The chain is SKP1-like protein 7 (ASK7) from Arabidopsis thaliana (Mouse-ear cress).